The following is a 103-amino-acid chain: Floral defensin-like protein 1 (103 aa).

Residues 1-25 (MARSICFFAVAILALMLFAAYDAEA) form the signal peptide. 5 disulfide bridges follow: Cys28-Cys72, Cys32-Cys48, Cys39-Cys59, Cys45-Cys66, and Cys49-Cys68. A propeptide spans 73 to 103 (VFEKTEATQTETFTKDVNTLAEALLEADMMV) (removed in mature form).

This sequence belongs to the DEFL family. Post-translationally, when compared to other plant defensins, the petunia defensins have an additional fifth disulfide bond. In terms of tissue distribution, petals.

It is found in the secreted. The protein resides in the vacuole. In terms of biological role, plant defense peptide with antifungal activity against F.oxysporum and B.cinerea. The sequence is that of Floral defensin-like protein 1 (D1) from Petunia hybrida (Petunia).